A 302-amino-acid polypeptide reads, in one-letter code: Melibiose operon regulatory protein (302 aa).

One can recognise an HTH araC/xylS-type domain in the interval 194–292; it reads SQMLGFIAEN…GMSPQQYRKL (99 aa). 2 consecutive DNA-binding regions (H-T-H motif) follow at residues 211–232 and 259–282; these read NDVA…QRVM and ILDI…GKYV.

Functionally, transcription activator for the expression of the melAB operon. MelR binds at two sites located upstream of the melAB transcription site. This is Melibiose operon regulatory protein (melR) from Escherichia coli O6:H1 (strain CFT073 / ATCC 700928 / UPEC).